The chain runs to 663 residues: MRKLYHGACYYPELWDEETIQQDIDIMREVGVNVVRIGEFAWSVMEPEEGKIDVGFFKEIIARLYDSGIETIMCTPTPTPPIWFSHGRPERMHANEKREIMGHGSRQHACTNNPYFRKKAAIITTAIAKELGRLPGLIGWQLDNEFKCHVAECMCETCLRLWHDWLKNRYGVIERLNEAWGTDVWSETYQTFEQVPQPGPAPFLHHASLRTMYQLFSMEMIASFADEQAKIIRCYSDAPITHNGSVMFSVDNERMFQNLDFASYDTYASQENASAFLLNCDLWRNLKQGRPFWILETSPSYAASLESSAYPHADGYLQAEAVSSYALGSQGFCYWLWRQQRSGSEISHGSVLSAWGEPTIGYQNVLAVERARKEIEPIILSTEPVQAEAAMTYSDRAKAFIKTEPHRGLRHRSLVTHFYERILNTGIHRDLIPEGAPLDGYRLLFTPFVPYLSSEFIKKASAFAEAGGIWITGPLTGGRTCEHTIHTDCGLGELEKTSGIKTLFTFPMNENVNTGKAFGITAPLGLWSAVFDTESGNTLGTVEAGPGAGHAFLTERNYGEGKIVMLGSLPSGKEGDAMLEALVRHYAEEAVISSRSDVTPGTIVAPRIGENGLVWIVVNMDGKGGSVTLPESGTDLLTHRLEKAGRLAVGPHEYRVIQFDNHS.

R106 serves as a coordination point for substrate. C110 is a Zn(2+) binding site. N144 is a substrate binding site. The active-site Proton donor is the E145. C153, C155, and C158 together coordinate Zn(2+). Catalysis depends on E296, which acts as the Nucleophile. E345–H348 lines the substrate pocket.

Belongs to the glycosyl hydrolase 42 family. Homotrimer.

It carries out the reaction Hydrolysis of terminal non-reducing beta-D-galactose residues in beta-D-galactosides.. In terms of biological role, may play a role in the degradation of rhamnogalacturonan derived from plant cell walls. The chain is Beta-galactosidase YesZ (yesZ) from Bacillus subtilis (strain 168).